The sequence spans 498 residues: Galactose-1-phosphate uridylyltransferase (498 aa).

The protein belongs to the galactose-1-phosphate uridylyltransferase type 2 family.

Its subcellular location is the cytoplasm. The enzyme catalyses alpha-D-galactose 1-phosphate + UDP-alpha-D-glucose = alpha-D-glucose 1-phosphate + UDP-alpha-D-galactose. The protein operates within carbohydrate metabolism; galactose metabolism. The chain is Galactose-1-phosphate uridylyltransferase from Clostridium perfringens (strain SM101 / Type A).